Reading from the N-terminus, the 116-residue chain is Phosphoribosyl-AMP cyclohydrolase (116 aa).

Asp-85 contacts Mg(2+). Cys-86 lines the Zn(2+) pocket. Residues Asp-87 and Asp-89 each coordinate Mg(2+). 2 residues coordinate Zn(2+): Cys-102 and Cys-109.

Belongs to the PRA-CH family. In terms of assembly, homodimer. Mg(2+) is required as a cofactor. Requires Zn(2+) as cofactor.

The protein localises to the cytoplasm. The enzyme catalyses 1-(5-phospho-beta-D-ribosyl)-5'-AMP + H2O = 1-(5-phospho-beta-D-ribosyl)-5-[(5-phospho-beta-D-ribosylamino)methylideneamino]imidazole-4-carboxamide. Its pathway is amino-acid biosynthesis; L-histidine biosynthesis; L-histidine from 5-phospho-alpha-D-ribose 1-diphosphate: step 3/9. Catalyzes the hydrolysis of the adenine ring of phosphoribosyl-AMP. The sequence is that of Phosphoribosyl-AMP cyclohydrolase from Corynebacterium diphtheriae (strain ATCC 700971 / NCTC 13129 / Biotype gravis).